A 112-amino-acid chain; its full sequence is Diuretic hormone class 2 (112 aa).

Residues 1 to 24 (MVRATCLLASCVLFALLLIVPASA) form the signal peptide. The propeptide occupies 25 to 71 (YPRYPSNYFREEGQYEPEEIMDMLNRLGNLIQMERKMENYKEDITSE). Residue Pro104 is modified to Proline amide. A propeptide spanning residues 108–112 (RRDAH) is cleaved from the precursor.

Expressed in corpora cardiaca (CC), corpora allata (CA), antennal lobe (AL) and gnathal ganglion (GNG) (at protein level). Expression in CC, CA and AL detected in most animals, expression in GNG in few animals (at protein level).

It localises to the secreted. Regulation of fluid secretion. Stimulates Malpighian tubule fluid secretion. The chain is Diuretic hormone class 2 from Agrotis ipsilon (Black cutworm moth).